A 551-amino-acid polypeptide reads, in one-letter code: MSIVQTPAKRMTGGELGLILVFAALGFFSIVVAAKAYTPEYAFHAYLFAAASIATVFVIGNRYMDRPAELPPQTIDGKPNYNMAPVKVGTLLAVFWGIAGFLIGVIIALQMAYPLFNFDLPWISFGRLRPLHTSAVIFAFGGNVLIATSFYVVQRTSHARLAGYLAPWFVVLGYNFFIVIAGTGYLLGITQGKEYAEPEWYADLWLTIVWVTYFLVFLGTVLKRKEPHIYVANWFYLAFILTIAVLHLGNNAAIPVSVFSPKSYIVWSGVQDAMVQWWYGHNAVGFFLTAGFLALMYYFIPKRADKPVYSYRLSIVHFWALIFLYIWAGPHHLHYTALPDWAQTLGMTFSIMLWMPSWGGMINGLMTLSGAWDKLRTDPIIRMMVVAVAFYGMATFEGPMMSVKSVNSLSHYTEWGIGHVHSGALGWVAYISFGAIYCLIPWLWNKREMYSMKAIEWHFWVSTLGIVLYICAMWVAGILQGLMWRAYTALGFLEYSFIETVEAMHPLYVIRAIGGILFLAGSLIMAWNVFMTITRAETVSQPSGAALAPAE.

A run of 3 helical transmembrane segments spans residues 14-34 (GELG…VVAA), 40-60 (EYAF…FVIG), and 88-108 (VGTL…VIIA). A heme b-binding site is contributed by His132. 8 helical membrane-spanning segments follow: residues 133–153 (TSAV…FYVV), 169–189 (FVVL…LLGI), 202–222 (ADLW…GTVL), 229–249 (IYVA…LHLG), 280–300 (GHNA…YYFI), 313–333 (LSIV…PHHL), 345–365 (LGMT…INGL), and 383–403 (MMVV…MMSV). 3 residues coordinate Cu cation: His281, His331, and His332. Heme b-binding residues include His419 and His421. 3 helical membrane-spanning segments follow: residues 424–444 (ALGW…PWLW), 459–479 (FWVS…AGIL), and 513–533 (IGGI…FMTI).

This sequence belongs to the heme-copper respiratory oxidase family. It depends on Cu(2+) as a cofactor. The cofactor is heme b.

It localises to the cell membrane. The catalysed reaction is 4 Fe(II)-[cytochrome c] + O2 + 8 H(+)(in) = 4 Fe(III)-[cytochrome c] + 2 H2O + 4 H(+)(out). The protein operates within energy metabolism; oxidative phosphorylation. Its function is as follows. Cytochrome c oxidase is the component of the respiratory chain that catalyzes the reduction of oxygen to water. Subunits 1-3 form the functional core of the enzyme complex. Co I is the catalytic subunit of the enzyme. Electrons originating in cytochrome c or a quinol are transferred to the bimetallic center formed by a high-spin heme and copper B. The polypeptide is Cytochrome c oxidase subunit 1 homolog (fixN) (Azorhizobium caulinodans (strain ATCC 43989 / DSM 5975 / JCM 20966 / LMG 6465 / NBRC 14845 / NCIMB 13405 / ORS 571)).